The primary structure comprises 219 residues: MTYEKNIPNATAKRLSLYYRIFKRFHRENIVKTSSKQIAEAIGIDPATVRRDFSYFGELGRRGFGYDVSKLMTFFAELLNDNATTKVALVGVGNIGRALLHYRFQERNRMQLVMAFDTDDNELVGSQTEDNIPIYGISQIKDKIAQEDIKTAILTVPSVKAQEVAELLVDAGIEGILCFSPVNLNLPRHVVLQYVDLTSELQTLLYFMKEEEKARRNND.

The H-T-H motif DNA-binding region spans 17–56 (LYYRIFKRFHRENIVKTSSKQIAEAIGIDPATVRRDFSYF). NAD(+) is bound at residue 91 to 96 (GVGNIG).

The protein belongs to the transcriptional regulatory Rex family. In terms of assembly, homodimer.

Its subcellular location is the cytoplasm. Functionally, modulates transcription in response to changes in cellular NADH/NAD(+) redox state. In Streptococcus thermophilus (strain ATCC BAA-491 / LMD-9), this protein is Redox-sensing transcriptional repressor Rex.